Here is a 240-residue protein sequence, read N- to C-terminus: LexA repressor (240 aa).

Positions 26 to 46 (FDEMKDALDLASKSGIHRLIT) form a DNA-binding region, H-T-H motif. The disordered stretch occupies residues 78-113 (QPRRGFSPSVIEGSLGKPQPVQPPAPAKPANDENNS). Residues Ser160 and Lys198 each act as for autocatalytic cleavage activity in the active site.

This sequence belongs to the peptidase S24 family. In terms of assembly, homodimer.

The catalysed reaction is Hydrolysis of Ala-|-Gly bond in repressor LexA.. Its function is as follows. Represses a number of genes involved in the response to DNA damage (SOS response), including recA and lexA. In the presence of single-stranded DNA, RecA interacts with LexA causing an autocatalytic cleavage which disrupts the DNA-binding part of LexA, leading to derepression of the SOS regulon and eventually DNA repair. This Rhizobium rhizogenes (strain K84 / ATCC BAA-868) (Agrobacterium radiobacter) protein is LexA repressor.